A 258-amino-acid polypeptide reads, in one-letter code: 3-deoxy-manno-octulosonate cytidylyltransferase (258 aa).

The protein belongs to the KdsB family.

The protein resides in the cytoplasm. It carries out the reaction 3-deoxy-alpha-D-manno-oct-2-ulosonate + CTP = CMP-3-deoxy-beta-D-manno-octulosonate + diphosphate. It participates in nucleotide-sugar biosynthesis; CMP-3-deoxy-D-manno-octulosonate biosynthesis; CMP-3-deoxy-D-manno-octulosonate from 3-deoxy-D-manno-octulosonate and CTP: step 1/1. It functions in the pathway bacterial outer membrane biogenesis; lipopolysaccharide biosynthesis. Its function is as follows. Activates KDO (a required 8-carbon sugar) for incorporation into bacterial lipopolysaccharide in Gram-negative bacteria. The polypeptide is 3-deoxy-manno-octulosonate cytidylyltransferase (Blochmanniella floridana).